Consider the following 411-residue polypeptide: MATINDNYLKLKAGYLFPEIARRVNAFAEAHPEAKIIKLGIGDVTEPLPQACRQAMIKAVEEMGDRATFKGYGPEQGYNWLREKIAQNDFQARGCDIDASEIFISDGSKCDTGNILDIFGKNNTIAVTDPVYPVYVDTNVMAGHTGDANDKGEYLGLVYLPMTANNNFTPELPSQKVDLIYLCFPNNPTGATATKENLTKWVNYAKENGSIIFFDAAYEAFITDPSLPHSIYEIEGARDCAIEFRSFSKNAGFTGTRCALTVVPKTLKAKASDGSEVELWKLWNRRQSTKFNGVSYIVQRGAEAVYSEEGQAQVKALVNFYLENAKIICDKLSFAGLTVYGGVNAPYVWVKTPDGLSSWDFFDKLLQSANVVGTPGSGFGAAGEGYFRISAFNSRENVEEATRRIIEKLTV.

The substrate site is built by tyrosine 15 and glycine 42. Pyridoxal 5'-phosphate-binding positions include tyrosine 72, 108–109 (SK), tyrosine 132, asparagine 187, tyrosine 218, and 246–248 (SFS). Lysine 109, tyrosine 132, and asparagine 187 together coordinate substrate. Lysine 249 is subject to N6-(pyridoxal phosphate)lysine. Residues arginine 257 and asparagine 292 each coordinate pyridoxal 5'-phosphate. 2 residues coordinate substrate: asparagine 292 and arginine 388.

This sequence belongs to the class-I pyridoxal-phosphate-dependent aminotransferase family. LL-diaminopimelate aminotransferase subfamily. Homodimer. It depends on pyridoxal 5'-phosphate as a cofactor.

It catalyses the reaction (2S,6S)-2,6-diaminopimelate + 2-oxoglutarate = (S)-2,3,4,5-tetrahydrodipicolinate + L-glutamate + H2O + H(+). It functions in the pathway amino-acid biosynthesis; L-lysine biosynthesis via DAP pathway; LL-2,6-diaminopimelate from (S)-tetrahydrodipicolinate (aminotransferase route): step 1/1. Involved in the synthesis of meso-diaminopimelate (m-DAP or DL-DAP), required for both lysine and peptidoglycan biosynthesis. Catalyzes the direct conversion of tetrahydrodipicolinate to LL-diaminopimelate. The protein is LL-diaminopimelate aminotransferase of Gloeothece citriformis (strain PCC 7424) (Cyanothece sp. (strain PCC 7424)).